A 525-amino-acid chain; its full sequence is Coronin-2A (525 aa).

WD repeat units lie at residues 80–120 (GHRG…LTKN), 130–170 (GHAR…SVIM), 178–217 (CHQD…VLQE), 220–263 (YKGH…VPVT), and 269–308 (GSSG…PHLN). Residues 485–524 (QMFYRQQDEIRRLRELVTQREVQAKQLELEIRNLRMNSPR) adopt a coiled-coil conformation.

It belongs to the WD repeat coronin family. Binds actin. Component of the N-Cor repressor complex, at least composed of NCOR1, NCOR2, HDAC3, TBL1X, TBL1R, CORO2A and GPS2.

This is Coronin-2A (CORO2A) from Bos taurus (Bovine).